We begin with the raw amino-acid sequence, 633 residues long: Threonine--tRNA ligase (633 aa).

One can recognise a TGS domain in the interval 1–61; the sequence is MINISFPDGS…DNDCRLRILT (61 aa). Residues 242–533 form a catalytic region; sequence DHRKLGKELD…LIEEYAGRFP (292 aa). Positions 333, 384, and 510 each coordinate Zn(2+).

The protein belongs to the class-II aminoacyl-tRNA synthetase family. As to quaternary structure, homodimer. The cofactor is Zn(2+).

It localises to the cytoplasm. The enzyme catalyses tRNA(Thr) + L-threonine + ATP = L-threonyl-tRNA(Thr) + AMP + diphosphate + H(+). In terms of biological role, catalyzes the attachment of threonine to tRNA(Thr) in a two-step reaction: L-threonine is first activated by ATP to form Thr-AMP and then transferred to the acceptor end of tRNA(Thr). Also edits incorrectly charged L-seryl-tRNA(Thr). The sequence is that of Threonine--tRNA ligase from Rickettsia bellii (strain OSU 85-389).